Here is a 560-residue protein sequence, read N- to C-terminus: Chaperonin GroEL 2 (560 aa).

Residues 29–32 (TLGP), 86–90 (DGTTT), G413, 478–480 (NAA), and D494 each bind ATP.

Belongs to the chaperonin (HSP60) family. As to quaternary structure, forms a cylinder of 14 subunits composed of two heptameric rings stacked back-to-back. Interacts with the co-chaperonin GroES.

The protein resides in the cytoplasm. It carries out the reaction ATP + H2O + a folded polypeptide = ADP + phosphate + an unfolded polypeptide.. Together with its co-chaperonin GroES, plays an essential role in assisting protein folding. The GroEL-GroES system forms a nano-cage that allows encapsulation of the non-native substrate proteins and provides a physical environment optimized to promote and accelerate protein folding. The sequence is that of Chaperonin GroEL 2 from Nostoc sp. (strain PCC 7120 / SAG 25.82 / UTEX 2576).